The chain runs to 273 residues: 2,3,4,5-tetrahydropyridine-2,6-dicarboxylate N-succinyltransferase (273 aa).

Residues R106 and D143 each coordinate substrate.

The protein belongs to the transferase hexapeptide repeat family. Homotrimer.

It localises to the cytoplasm. The enzyme catalyses (S)-2,3,4,5-tetrahydrodipicolinate + succinyl-CoA + H2O = (S)-2-succinylamino-6-oxoheptanedioate + CoA. The protein operates within amino-acid biosynthesis; L-lysine biosynthesis via DAP pathway; LL-2,6-diaminopimelate from (S)-tetrahydrodipicolinate (succinylase route): step 1/3. This is 2,3,4,5-tetrahydropyridine-2,6-dicarboxylate N-succinyltransferase from Wolbachia sp. subsp. Brugia malayi (strain TRS).